We begin with the raw amino-acid sequence, 137 residues long: Large ribosomal subunit protein uL16 (137 aa).

The protein belongs to the universal ribosomal protein uL16 family. Part of the 50S ribosomal subunit.

Functionally, binds 23S rRNA and is also seen to make contacts with the A and possibly P site tRNAs. The protein is Large ribosomal subunit protein uL16 of Aromatoleum aromaticum (strain DSM 19018 / LMG 30748 / EbN1) (Azoarcus sp. (strain EbN1)).